Consider the following 572-residue polypeptide: Dityrosine transporter 1 (572 aa).

Disordered stretches follow at residues 1–28 (MGSE…STFH) and 49–95 (RANI…SPDT). Topologically, residues 1–110 (MGSEPFQKKN…YTYFSKDQRL (110 aa)) are cytoplasmic. Polar residues predominate over residues 13 to 28 (LQINSQESGTTRSTFH). Basic and acidic residues predominate over residues 50–62 (ANIDHDVFHEHPD). Polar residues predominate over residues 83–95 (SSNSQSRDPSPDT). Residues 111 to 131 (IIFGIIIFIGFLGPMSGNIYI) traverse the membrane as a helical segment. At 132–149 (PALPLLQREYDVSATTIN) the chain is on the extracellular side. The helical transmembrane segment at 150-170 (ATVSVFMAVFSVGPLFWGALA) threads the bilayer. The Cytoplasmic segment spans residues 171–184 (DFGGRKFLYMVSLS). The helical transmembrane segment at 185–205 (LMLIVNILLAAVPVNIAALFV) threads the bilayer. The Extracellular segment spans residues 206-207 (LR). The helical transmembrane segment at 208–228 (IFQAFASSSVISLGAGTVTDV) threads the bilayer. Residues 229–240 (VPPKHRGKAIAY) lie on the Cytoplasmic side of the membrane. The helical transmembrane segment at 241 to 261 (FMMGPNMGPIIAPIVAGLILM) threads the bilayer. At 262 to 267 (KGNYWR) the chain is on the extracellular side. A helical membrane pass occupies residues 268–288 (WLFGFTSIMTGIALILVTALL). Residues 289 to 366 (PETLRCIVGN…TLYWKMIKCP (78 aa)) lie on the Cytoplasmic side of the membrane. The chain crosses the membrane as a helical span at residues 367–387 (PIIITSVSTALLFSSYYAFSV). Topologically, residues 388 to 398 (TFSYYLEHDYR) are extracellular. A helical membrane pass occupies residues 399–419 (FTMLEIGAAYVCPGVAMLLGS). At 420–446 (QSGGHLSDYLRSRWIKSHPKKKFPAEF) the chain is on the cytoplasmic side. Residues 447-469 (RLLLNLIGILLTICGTIGYGWAI) traverse the membrane as a helical segment. Over 470–472 (FFH) the chain is Extracellular. Residues 473-493 (YHFVVLLVFSALTAFGMTWCS) traverse the membrane as a helical segment. At 494 to 520 (NTSMTYLTELFPKRAAGTVAVSSFFRN) the chain is on the cytoplasmic side. Residues 521 to 541 (VGAAISSAIILQLCNAMGIGW) form a helical membrane-spanning segment. Cys-542 is a topological domain (extracellular). Residues 543-563 (FTGLGLCSSISLIGILYLLIF) form a helical membrane-spanning segment. A required for the localization to the prospore membrane region spans residues 548–572 (LCSSISLIGILYLLIFQRKYTAKEF). Residues 564–572 (QRKYTAKEF) are Cytoplasmic-facing.

The protein belongs to the major facilitator superfamily. CAR1 family. Post-translationally, phosphorylated.

It localises to the prospore membrane. Functionally, prospore-specific dityrosine transporter responsible for translocation of dityrosine through the prospore membrane and required for the formation of the outermost layer of the spore. This chain is Dityrosine transporter 1 (DTR1), found in Saccharomyces cerevisiae (strain ATCC 204508 / S288c) (Baker's yeast).